A 514-amino-acid chain; its full sequence is Calcium-binding mitochondrial carrier protein SCaMC-2 (514 aa).

Topologically, residues 1–234 (MARPRSLVSP…EKQTGMWWRH (234 aa)) are mitochondrial intermembrane. 4 consecutive EF-hand domains span residues 56 to 91 (EHERRLQILFQELDVNKDGAICINDLAVGLKRLGVH), 92 to 122 (RTELELRKIVKAGDKDQDGQLDFDEFVHYLR), 123 to 158 (DHEKKLRLVFKSLDKKNDGRIDAQEIMQSLRDLGVN), and 159 to 194 (ISEQQAEKILKSMDKNGTMTIDWNEWRDYHLLHSAE). Ca(2+) is bound by residues Asp69, Asn71, Asp73, Asp80, Asp105, Asp107, Asp109, Gln111, and Glu116. Solcar repeat units follow at residues 229–315 (GMWW…IKRI), 323–408 (LGIH…LKNA), and 420–508 (PGVF…LKLT). Residues 235 to 252 (LVAGGGAGAVSRTCTAPL) form a helical membrane-spanning segment. Over 253 to 289 (DRLKVLMQVHASRSNNMSILGGFTHMIREGGFRSLWR) the chain is Mitochondrial matrix. A helical transmembrane segment spans residues 290 to 309 (GNGINVIKIAPESAIKFMAY). At 310–332 (EQIKRIIGSNQETLGIHERFVAG) the chain is on the mitochondrial intermembrane side. A helical membrane pass occupies residues 333–346 (SLAGVIAQSSIYPM). Residues 347 to 382 (EVLKTRMALRKTGQYQGVLDCGKKILLQEGLSAFYK) are Mitochondrial matrix-facing. Residues 383 to 402 (GYVPNMLGIIPYAGIDLAVY) traverse the membrane as a helical segment. At 403–425 (ETLKNAWLQRYATSSADPGVFVL) the chain is on the mitochondrial intermembrane side. A helical membrane pass occupies residues 426–443 (LACGTVSSTCGQLASYPL). At 444–482 (ALVRTRMQAEASVEGAPQMTMSKLFKHIVKTEGAFGLYR) the chain is on the mitochondrial matrix side. The chain crosses the membrane as a helical span at residues 483 to 502 (GLAPNFMKVIPAVSISYVVY). Over 503 to 514 (ENLKLTLGVQSR) the chain is Mitochondrial intermembrane.

Belongs to the mitochondrial carrier (TC 2.A.29) family.

The protein localises to the mitochondrion inner membrane. Functionally, calcium-dependent mitochondrial solute carrier. In Xenopus laevis (African clawed frog), this protein is Calcium-binding mitochondrial carrier protein SCaMC-2 (slc25a25).